Here is a 90-residue protein sequence, read N- to C-terminus: UPF0213 protein Reut_B5558 (90 aa).

One can recognise a GIY-YIG domain in the interval 5-80; it reads RQWYLYLLEC…KRMSSAQKIA (76 aa).

It belongs to the UPF0213 family.

The chain is UPF0213 protein Reut_B5558 from Cupriavidus pinatubonensis (strain JMP 134 / LMG 1197) (Cupriavidus necator (strain JMP 134)).